Reading from the N-terminus, the 56-residue chain is Conotoxin Bu12 (56 aa).

The first 2 residues, 1-2 (TA), serve as a signal peptide directing secretion. The propeptide occupies 3 to 25 (EDSRGTQLHRALRKATKLPVSTR). 3 cysteine pairs are disulfide-bonded: cysteine 26–cysteine 40, cysteine 33–cysteine 44, and cysteine 39–cysteine 49.

The protein belongs to the conotoxin O1 superfamily. Expressed by the venom duct.

The protein resides in the secreted. In Conus bullatus (Bubble cone), this protein is Conotoxin Bu12.